The primary structure comprises 227 residues: MSDFQWRFIDFALQYDVLRFGNFRTKAGRPSPYFFNAGLFNDGFALKQLGQFYAQAILASGIRFDALFGPAYKGIPLVSTIAIALAEAGHNHPFSFNRKEIKDHGEGGDIVGAPLAGRILIVDDVVSAGLSVGESITLIHAAGATPCGIMVALDRMEKGKSECSTLQEIKNKYDIPVISLITLDDIIAYLHTRQDLVHHIPAIETYRTFYGAKVPDTVNHTGRSTSV.

Lys26 provides a ligand contact to 5-phospho-alpha-D-ribose 1-diphosphate. 34-35 (FF) is a binding site for orotate. Residues 72-73 (YK), Arg98, Lys99, Lys102, His104, and 123-131 (DDVVSAGLS) contribute to the 5-phospho-alpha-D-ribose 1-diphosphate site. Positions 127 and 155 each coordinate orotate.

It belongs to the purine/pyrimidine phosphoribosyltransferase family. PyrE subfamily. In terms of assembly, homodimer. It depends on Mg(2+) as a cofactor.

The enzyme catalyses orotidine 5'-phosphate + diphosphate = orotate + 5-phospho-alpha-D-ribose 1-diphosphate. Its pathway is pyrimidine metabolism; UMP biosynthesis via de novo pathway; UMP from orotate: step 1/2. Its function is as follows. Catalyzes the transfer of a ribosyl phosphate group from 5-phosphoribose 1-diphosphate to orotate, leading to the formation of orotidine monophosphate (OMP). The chain is Orotate phosphoribosyltransferase from Nitrosomonas europaea (strain ATCC 19718 / CIP 103999 / KCTC 2705 / NBRC 14298).